The primary structure comprises 1074 residues: ADAMTS-like protein 4 (1074 aa).

Positions 1 to 24 (MENWTGRPWLYLLLLLSLPQLCLD) are cleaved as a signal peptide. Positions 48–93 (GPWVQWASCSQPCGVGVQRRSRTCQLPTVQLHPSLPLPPRPPRHPE) constitute a TSP type-1 1 domain. The segment at 77-342 (QLHPSLPLPP…QHPGAWLPLL (266 aa)) is disordered. A compositionally biased stretch (polar residues) spans 103–119 (RPQTSPETLPLYRTQSR). A compositionally biased stretch (basic and acidic residues) spans 132-152 (LGREETQEIRAARRSRLRDPI). The segment covering 206-226 (ANGSPQTELPPTELSVHTPSP) has biased composition (polar residues). The segment covering 310–323 (GQQGQGPWGTGGTP) has biased composition (gly residues). A glycan (N-linked (GlcNAc...) (complex) asparagine) is linked at Asn-490. 5 consecutive TSP type-1 domains span residues 723 to 782 (CPPY…QLRL), 783 to 842 (CGHW…GPCT), 845 to 909 (WFHS…GPCE), 910 to 969 (RTWR…QGQA), and 970 to 1026 (CQDR…QPCS). Asn-773 carries N-linked (GlcNAc...) asparagine glycosylation. The PLAC domain maps to 1029–1066 (PDDQCKDSSPHCPLVVQARLCVYPYYTATCCRSCAHVL).

Interacts with CTSB. Interacts with FBN1. N-glycosylated. Can be O-fucosylated by POFUT2 on a serine or a threonine residue found within the consensus sequence C1-X(2)-(S/T)-C2-G of the TSP type-1 repeat domains where C1 and C2 are the first and second cysteine residue of the repeat, respectively. Fucosylated repeats can then be further glycosylated by the addition of a beta-1,3-glucose residue by the glucosyltransferase, B3GALTL. Fucosylation mediates the efficient secretion of ADAMTS family members. Can also be C-glycosylated with one or two mannose molecules on tryptophan residues within the consensus sequence W-X-X-W of the TPRs. N- and C-glycosylations can also facilitate secretion. Expressed in colon, heart, leukocyte, liver, lung, skeletal muscle, spleen, testis and placenta. Weaker expression in bone marrow, brain tissue, kidney and pancreas. Expression studies in fetal tissues reveal strong expression in heart, kidney, liver, lung and skeletal muscle, but weaker expression in fetal brain and skin.

The protein localises to the secreted. Its subcellular location is the extracellular space. It localises to the extracellular matrix. Positive regulation of apoptosis. May facilitate FBN1 microfibril biogenesis. The sequence is that of ADAMTS-like protein 4 (ADAMTSL4) from Homo sapiens (Human).